A 132-amino-acid polypeptide reads, in one-letter code: L-ectoine synthase (132 aa).

It belongs to the ectoine synthase family.

The catalysed reaction is (2S)-4-acetamido-2-aminobutanoate = L-ectoine + H2O. The protein operates within amine and polyamine biosynthesis; ectoine biosynthesis; L-ectoine from L-aspartate 4-semialdehyde: step 3/3. Catalyzes the circularization of gamma-N-acetyl-alpha,gamma-diaminobutyric acid (ADABA) to ectoine (1,4,5,6-tetrahydro-2-methyl-4-pyrimidine carboxylic acid), which is an excellent osmoprotectant. The chain is L-ectoine synthase from Rhodococcus erythropolis (strain PR4 / NBRC 100887).